The sequence spans 696 residues: Elongation factor G (696 aa).

The 283-residue stretch at Glu-8–Ala-290 folds into the tr-type G domain. GTP is bound by residues Ala-17–Thr-24, Asp-88–His-92, and Asn-142–Asp-145.

It belongs to the TRAFAC class translation factor GTPase superfamily. Classic translation factor GTPase family. EF-G/EF-2 subfamily.

It localises to the cytoplasm. Catalyzes the GTP-dependent ribosomal translocation step during translation elongation. During this step, the ribosome changes from the pre-translocational (PRE) to the post-translocational (POST) state as the newly formed A-site-bound peptidyl-tRNA and P-site-bound deacylated tRNA move to the P and E sites, respectively. Catalyzes the coordinated movement of the two tRNA molecules, the mRNA and conformational changes in the ribosome. The sequence is that of Elongation factor G from Nitrosospira multiformis (strain ATCC 25196 / NCIMB 11849 / C 71).